A 211-amino-acid chain; its full sequence is Peptidyl-prolyl cis-trans isomerase-like 3 (211 aa).

The 204-residue stretch at 1-204 folds into the PPIase cyclophilin-type domain; sequence MSVTLHTTHG…ETLRINRVTI (204 aa).

The protein belongs to the cyclophilin-type PPIase family. PPIL3 subfamily.

It catalyses the reaction [protein]-peptidylproline (omega=180) = [protein]-peptidylproline (omega=0). PPIases accelerate the folding of proteins. It catalyzes the cis-trans isomerization of proline imidic peptide bonds in oligopeptides. The sequence is that of Peptidyl-prolyl cis-trans isomerase-like 3 (cyp10) from Emericella nidulans (strain FGSC A4 / ATCC 38163 / CBS 112.46 / NRRL 194 / M139) (Aspergillus nidulans).